The following is a 494-amino-acid chain: One cut domain family member 3 (494 aa).

Disordered stretches follow at residues 130–162, 199–239, and 295–319; these read AAAV…RLAA, LSPL…GDKL, and AHGP…AAAE. 2 stretches are compositionally biased toward pro residues: residues 148 to 158 and 214 to 225; these read AAAPPPPPPPQ and PQPPPPPPPPPL. A compositionally biased stretch (gly residues) spans 297–313; it reads GPHGGGGGPGGSGGGPS. The segment at residues 312 to 398 is a DNA-binding region (CUT); the sequence is PSAGAAAEEI…QRMSALRLAA (87 aa). Residues 414–473 constitute a DNA-binding region (homeobox); it reads PKKQRLVFTDLQRRTLIAIFKENKRPSKEMQVTISQQLGLELNTVSNFFMNARRRCMNRW. Residues 475–494 form a disordered region; it reads EEPSTAPGGPAGATATFSKA. The segment covering 476–494 has biased composition (low complexity); that stretch reads EPSTAPGGPAGATATFSKA.

This sequence belongs to the CUT homeobox family.

It is found in the nucleus. In terms of biological role, transcriptional activator. Binds the consensus DNA sequence 5'-DHWATTGAYTWWD-3' on a variety of gene promoters such as those of HNF3B and TTR. This chain is One cut domain family member 3 (ONECUT3), found in Homo sapiens (Human).